Consider the following 757-residue polypeptide: MSVAEIEEGVFEATATIDNGSFGTRTIRFETGRLAQQAAGAVVAYLDDENMLLSATTASKSPKEHFDFFPLTVDVEERMYAAGRIPGSFFRREGRPSTDAILTCRLIDRPLRPSFVDGLRNEIQVVVTILSLDPNDLYDVLAINAASASTQLGGLPFSGPIGGVRVALIDGTWVAFPTVEQLERAVFDMVVAGRKVDGADGPDVAIMMVEAEATSNVIELIDGGAQAPTETVVAQGLEAAKPFIEVLCTAQQELADKAARPTSDYPTFPDYGDDVYYSVASVATDELSKALTIGGKAERDARTDELKAEVLARLAETYEGREKEVSAAFRSLTKKLVRQRILTDHFRIDGRGITDIRALSAEVAVVPRAHGSALFQRGETQILGVTTLDMVKMAQQIDSLGPETTKRYMHHYNFPPFSTGETGRVGSPKRREIGHGALAERALVPVLPSLEDFPYAIRQVSEALGSNGSTSMGSVCASTLALLNAGVPLKAPVAGIAMGLVSDDIEVEAGDGTKSLERRFVTLTDILGAEDAFGDMDFKVAGTKDFVTALQLDTKLDGIPSQVLAGALSQAKDARLTILEVMAEAIDEPDEMSPYAPRVTTIRVPVDKIGEVIGPKGKIINAITEETGAQISIEDDGTVFVGATDGPSAQAAIDRINAIANPQLPTVGERFLGTVVKTTDFGAFVSLLPGRDGLVHISKLGKGKRIAKVEDVVNVGDKLRVEIADIDKRGKISLVLVEEDNSAPADTPAAAPADATS.

The Mg(2+) site is built by Asp531 and Asp537. The KH domain maps to Pro597 to Ile656. In terms of domain architecture, S1 motif spans Gly668 to Val737.

It belongs to the polyribonucleotide nucleotidyltransferase family. Requires Mg(2+) as cofactor.

It localises to the cytoplasm. It catalyses the reaction RNA(n+1) + phosphate = RNA(n) + a ribonucleoside 5'-diphosphate. Its function is as follows. Involved in mRNA degradation. Catalyzes the phosphorolysis of single-stranded polyribonucleotides processively in the 3'- to 5'-direction. This chain is Polyribonucleotide nucleotidyltransferase, found in Mycolicibacterium paratuberculosis (strain ATCC BAA-968 / K-10) (Mycobacterium paratuberculosis).